Reading from the N-terminus, the 221-residue chain is UPF0502 protein PLES_16071 (221 aa).

The protein belongs to the UPF0502 family.

The chain is UPF0502 protein PLES_16071 from Pseudomonas aeruginosa (strain LESB58).